A 188-amino-acid polypeptide reads, in one-letter code: Elongation factor P (188 aa).

It belongs to the elongation factor P family.

Its subcellular location is the cytoplasm. It functions in the pathway protein biosynthesis; polypeptide chain elongation. Functionally, involved in peptide bond synthesis. Stimulates efficient translation and peptide-bond synthesis on native or reconstituted 70S ribosomes in vitro. Probably functions indirectly by altering the affinity of the ribosome for aminoacyl-tRNA, thus increasing their reactivity as acceptors for peptidyl transferase. The protein is Elongation factor P of Stutzerimonas stutzeri (strain A1501) (Pseudomonas stutzeri).